A 97-amino-acid polypeptide reads, in one-letter code: MLIKQFSRRSKNTKVQILLAFAALFVLAVGSYASESKKLDLRDALFSAMFSADYQLNPQERGCRYFLGECKKTSECCEHLACHDKHKWCAWDWTIGK.

Positions Met-1–Ala-33 are cleaved as a signal peptide. The propeptide occupies Ser-34 to Arg-61. 3 cysteine pairs are disulfide-bonded: Cys-63/Cys-77, Cys-70/Cys-82, and Cys-76/Cys-89.

It belongs to the neurotoxin 10 (Hwtx-1) family. 12 (Hntx-12) subfamily. In terms of tissue distribution, expressed by the venom gland.

It is found in the secreted. Functionally, ion channel inhibitor. The sequence is that of U6-theraphotoxin-Hhn1a 3 from Cyriopagopus hainanus (Chinese bird spider).